Reading from the N-terminus, the 1044-residue chain is Ras GTPase-activating protein 1 (1044 aa).

Met1 bears the N-acetylmethionine mark. The segment at 1-160 (MMAAEAGGEE…DEGDSLDGPE (160 aa)) is hydrophobic. One can recognise an SH2 1 domain in the interval 178–269 (WYHGKLDRTI…LKGEKLLYPV (92 aa)). The SH3 domain maps to 276–338 (EDRRRVRAIL…VEDLVEEVGR (63 aa)). An SH2 2 domain is found at 348–438 (WFHGKISKQE…VEGYYLKEPV (91 aa)). The PH domain occupies 471–574 (NIVKKGYLLK…WMKGLQAFCN (104 aa)). The C2 domain occupies 574 to 687 (NLRKSSPGTS…QKGHATDEWF (114 aa)). Phosphotyrosine is present on Tyr612. Repeats lie at residues 646–664 (PDINRFEITLSNKTKKSKD) and 665–683 (PDILFMRCQLSRLQKGHAT). Residues 761 to 971 (KLESLLLCTL…HRMIMFLDEL (211 aa)) form the Ras-GAP domain. Ser828 carries the post-translational modification Phosphoserine.

Interacts with SQSTM1. Interacts with SPSB1; the interaction does not promote degradation. Interacts with CAV2 (tyrosine phosphorylated form). Directly interacts with NCK1. Interacts with PDGFRB (tyrosine phosphorylated). Interacts (via SH2 domain) with the 'Tyr-9' phosphorylated form of PDPK1. Interacts with tyrosine-phosphorylated EPHB4. In terms of processing, phosphorylated by SRC and LCK. The phosphorylation SRC inhibits its ability to stimulate the Ras-GTPase activity, whereas phosphorylation by LCK does not display any effect on stimulation activity.

It localises to the cytoplasm. Inhibitory regulator of the Ras-cyclic AMP pathway. Stimulates the GTPase of normal but not oncogenic Ras p21. In Bos taurus (Bovine), this protein is Ras GTPase-activating protein 1 (RASA1).